The following is a 186-amino-acid chain: Large ribosomal subunit protein uL5 (186 aa).

This sequence belongs to the universal ribosomal protein uL5 family. Part of the 50S ribosomal subunit; part of the 5S rRNA/L5/L18/L25 subcomplex. Contacts the 5S rRNA and the P site tRNA. Forms a bridge to the 30S subunit in the 70S ribosome.

Functionally, this is one of the proteins that bind and probably mediate the attachment of the 5S RNA into the large ribosomal subunit, where it forms part of the central protuberance. In the 70S ribosome it contacts protein S13 of the 30S subunit (bridge B1b), connecting the 2 subunits; this bridge is implicated in subunit movement. Contacts the P site tRNA; the 5S rRNA and some of its associated proteins might help stabilize positioning of ribosome-bound tRNAs. This chain is Large ribosomal subunit protein uL5, found in Karelsulcia muelleri (strain GWSS) (Sulcia muelleri).